Here is a 333-residue protein sequence, read N- to C-terminus: Protoheme IX farnesyltransferase (333 aa).

7 helical membrane passes run L64 to L84, T110 to V130, L133 to L153, I161 to G181, W189 to L209, I246 to F266, and A287 to I307.

Belongs to the UbiA prenyltransferase family. Protoheme IX farnesyltransferase subfamily.

The protein localises to the cell inner membrane. It carries out the reaction heme b + (2E,6E)-farnesyl diphosphate + H2O = Fe(II)-heme o + diphosphate. The protein operates within porphyrin-containing compound metabolism; heme O biosynthesis; heme O from protoheme: step 1/1. Functionally, converts heme B (protoheme IX) to heme O by substitution of the vinyl group on carbon 2 of heme B porphyrin ring with a hydroxyethyl farnesyl side group. The polypeptide is Protoheme IX farnesyltransferase (Prochlorococcus marinus (strain MIT 9215)).